The chain runs to 205 residues: Methylthioribulose-1-phosphate dehydratase (205 aa).

2 residues coordinate Zn(2+): H94 and H96.

Belongs to the aldolase class II family. MtnB subfamily. It depends on Zn(2+) as a cofactor.

The enzyme catalyses 5-(methylsulfanyl)-D-ribulose 1-phosphate = 5-methylsulfanyl-2,3-dioxopentyl phosphate + H2O. Its pathway is amino-acid biosynthesis; L-methionine biosynthesis via salvage pathway; L-methionine from S-methyl-5-thio-alpha-D-ribose 1-phosphate: step 2/6. Catalyzes the dehydration of methylthioribulose-1-phosphate (MTRu-1-P) into 2,3-diketo-5-methylthiopentyl-1-phosphate (DK-MTP-1-P). This is Methylthioribulose-1-phosphate dehydratase from Pectobacterium atrosepticum (strain SCRI 1043 / ATCC BAA-672) (Erwinia carotovora subsp. atroseptica).